The chain runs to 20 residues: VATFTLPDLPYDYGALEPAV.

This sequence belongs to the iron/manganese superoxide dismutase family. In terms of assembly, homotetramer. The cofactor is Mn(2+).

It is found in the mitochondrion matrix. The catalysed reaction is 2 superoxide + 2 H(+) = H2O2 + O2. In terms of biological role, destroys superoxide anion radicals which are normally produced within the cells and which are toxic to biological systems. This chain is Superoxide dismutase [Mn], mitochondrial (SODA), found in Hordeum vulgare (Barley).